Here is a 113-residue protein sequence, read N- to C-terminus: MNTVRVTFLLVFVLAVSLGQADKDENRMEMQEKTEQGKSYLDFAENLLLQKLEELEAKLLEEDSEESRNSRQKRCIGEGVPCDENDPRCCSGFVCLKPTLHGIWYKSYYCYKK.

Residues 1–21 (MNTVRVTFLLVFVLAVSLGQA) form the signal peptide. Residues 22-74 (DKDENRMEMQEKTEQGKSYLDFAENLLLQKLEELEAKLLEEDSEESRNSRQKR) constitute a propeptide that is removed on maturation. The disordered stretch occupies residues 61–83 (EEDSEESRNSRQKRCIGEGVPCD). 3 cysteine pairs are disulfide-bonded: cysteine 75-cysteine 90, cysteine 82-cysteine 95, and cysteine 89-cysteine 110.

Belongs to the neurotoxin 14 (magi-1) family. 01 (HNTX-16) subfamily. In terms of tissue distribution, expressed by the venom gland.

It localises to the secreted. In terms of biological role, probable ion channel inhibitor. In Cyriopagopus hainanus (Chinese bird spider), this protein is U11-theraphotoxin-Hhn1k.